The following is a 347-amino-acid chain: Vitellogenin-3 (347 aa).

The signal sequence occupies residues 1-15; the sequence is MRGFILALVLALVGA. Residue N80 is glycosylated (N-linked (GlcNAc...) asparagine). Over residues 104-118 the composition is skewed to low complexity; the sequence is PSATPLSSSSSTDSS. Disordered regions lie at residues 104–174 and 200–234; these read PSAT…DKHC and QDPR…MFLG. The span at 124–133 shows a compositional bias: basic and acidic residues; sequence PGNKRDKDEI. The span at 144 to 163 shows a compositional bias: low complexity; it reads SSSSSSSSSTGSGSSKTCSS. Positions 164–174 are enriched in basic and acidic residues; the sequence is SREDSSRDKHC. A glycan (N-linked (GlcNAc...) asparagine) is linked at N208. A compositionally biased stretch (low complexity) spans 209-219; sequence SSISSSSSSSS.

Post-translationally, phosvitin, an egg yolk storage protein, is one of the most highly phosphorylated (10%) proteins in nature. In terms of processing, cathepsin D is responsible for intraoocytic processing of vitellogenin. May contain intrachain disulfide bonds. As to expression, produced by the liver, secreted into the blood and then sequestered by receptor mediated endocytosis into growing oocytes, where it is generally cleaved, giving rise to the respective yolk components.

Precursor of the egg-yolk proteins that are sources of nutrients during early development of oviparous organisms. Its function is as follows. Phosvitin is believed to be of importance in sequestering calcium, iron and other cations for the developing embryo. This is Vitellogenin-3 (VTG3) from Gallus gallus (Chicken).